Consider the following 271-residue polypeptide: Cyclase-like protein 3 (271 aa).

A signal peptide spans 1–21 (MYHLLIIITTLSFSSINITFA).

It belongs to the Cyclase 1 superfamily.

The protein localises to the secreted. The protein resides in the extracellular space. Its subcellular location is the extracellular matrix. This chain is Cyclase-like protein 3, found in Arabidopsis thaliana (Mouse-ear cress).